Consider the following 207-residue polypeptide: FMN-dependent NADH:quinone oxidoreductase (207 aa).

FMN contacts are provided by residues Ser10, 16-18 (SIS), 96-99 (MYNL), and 141-144 (SRGG).

It belongs to the azoreductase type 1 family. Homodimer. The cofactor is FMN.

The enzyme catalyses 2 a quinone + NADH + H(+) = 2 a 1,4-benzosemiquinone + NAD(+). The catalysed reaction is N,N-dimethyl-1,4-phenylenediamine + anthranilate + 2 NAD(+) = 2-(4-dimethylaminophenyl)diazenylbenzoate + 2 NADH + 2 H(+). Functionally, quinone reductase that provides resistance to thiol-specific stress caused by electrophilic quinones. In terms of biological role, also exhibits azoreductase activity. Catalyzes the reductive cleavage of the azo bond in aromatic azo compounds to the corresponding amines. In Nostoc sp. (strain PCC 7120 / SAG 25.82 / UTEX 2576), this protein is FMN-dependent NADH:quinone oxidoreductase.